The sequence spans 441 residues: Ribulose bisphosphate carboxylase large chain (441 aa).

Residue Lys5 is modified to N6,N6,N6-trimethyllysine. Positions 114 and 164 each coordinate substrate. Lys166 acts as the Proton acceptor in catalysis. Residue Lys168 coordinates substrate. 3 residues coordinate Mg(2+): Lys192, Asp194, and Glu195. Lys192 is subject to N6-carboxylysine. The active-site Proton acceptor is His285. Arg286, His318, and Ser370 together coordinate substrate.

Belongs to the RuBisCO large chain family. Type I subfamily. As to quaternary structure, heterohexadecamer of 8 large chains and 8 small chains; disulfide-linked. The disulfide link is formed within the large subunit homodimers. Mg(2+) is required as a cofactor. Post-translationally, the disulfide bond which can form in the large chain dimeric partners within the hexadecamer appears to be associated with oxidative stress and protein turnover.

Its subcellular location is the plastid. The protein localises to the chloroplast. It catalyses the reaction 2 (2R)-3-phosphoglycerate + 2 H(+) = D-ribulose 1,5-bisphosphate + CO2 + H2O. The enzyme catalyses D-ribulose 1,5-bisphosphate + O2 = 2-phosphoglycolate + (2R)-3-phosphoglycerate + 2 H(+). Its function is as follows. RuBisCO catalyzes two reactions: the carboxylation of D-ribulose 1,5-bisphosphate, the primary event in carbon dioxide fixation, as well as the oxidative fragmentation of the pentose substrate in the photorespiration process. Both reactions occur simultaneously and in competition at the same active site. The chain is Ribulose bisphosphate carboxylase large chain from Begonia metallica x Begonia sanguinea.